A 185-amino-acid polypeptide reads, in one-letter code: MGRGKTPNLGEFRVATDQSASRKISQFCVRLEAKQRLRFNYGLTERQLLKYVRIARKTRGSTGQVPPQLLEMRLDNVIFRLGMASTIPAARQLVNHRHILVNNRIVDVPSYRCKPKDIITVRNRPTSCNALKGESPGGGETPDHLTASLSEGSRPTGLVNRIANRESVSLNINELLVVEYYSRKA.

The region spanning 72–134 is the S4 RNA-binding domain; that stretch reads MRLDNVIFRL…PTSCNALKGE (63 aa). Residues 132–154 form a disordered region; it reads KGESPGGGETPDHLTASLSEGSR.

This sequence belongs to the universal ribosomal protein uS4 family. In terms of assembly, part of the 30S ribosomal subunit. Contacts protein S5. The interaction surface between S4 and S5 is involved in control of translational fidelity.

Its subcellular location is the plastid. It is found in the chloroplast. Its function is as follows. One of the primary rRNA binding proteins, it binds directly to 16S rRNA where it nucleates assembly of the body of the 30S subunit. With S5 and S12 plays an important role in translational accuracy. This is Small ribosomal subunit protein uS4c (rps4) from Woodwardia radicans (Rooting chainfern).